A 263-amino-acid polypeptide reads, in one-letter code: 3-deoxy-manno-octulosonate cytidylyltransferase 2 (263 aa).

Belongs to the KdsB family.

The protein resides in the cytoplasm. The catalysed reaction is 3-deoxy-alpha-D-manno-oct-2-ulosonate + CTP = CMP-3-deoxy-beta-D-manno-octulosonate + diphosphate. It participates in nucleotide-sugar biosynthesis; CMP-3-deoxy-D-manno-octulosonate biosynthesis; CMP-3-deoxy-D-manno-octulosonate from 3-deoxy-D-manno-octulosonate and CTP: step 1/1. Its pathway is bacterial outer membrane biogenesis; lipopolysaccharide biosynthesis. Its function is as follows. Activates KDO (a required 8-carbon sugar) for incorporation into bacterial lipopolysaccharide in Gram-negative bacteria. The chain is 3-deoxy-manno-octulosonate cytidylyltransferase 2 from Paraburkholderia phytofirmans (strain DSM 17436 / LMG 22146 / PsJN) (Burkholderia phytofirmans).